The primary structure comprises 703 residues: Protein CNGC15c (703 aa).

The segment covering 1 to 10 (MGFDNPRSER) has biased composition (basic and acidic residues). The disordered stretch occupies residues 1–23 (MGFDNPRSERFEDDPEISKIPTT). 5 helical membrane-spanning segments follow: residues 91-111 (IFLV…YLPV), 179-199 (GFWL…WIII), 216-236 (FFII…SSQI), 255-275 (LMLY…LSIE), and 372-392 (FIGE…LFAL). Residue 480 to 565 (LFDQMDERML…WALDPRPSVI (86 aa)) participates in a nucleoside 3',5'-cyclic phosphate binding. The IQ domain occupies 616–644 (RTWAACFIQAAWRRHKKRKEAAELRAKEN). The interval 676-703 (KGVNMHSGTNSGVVSSLQKPTEPDFSDE) is disordered. Residues 681-694 (HSGTNSGVVSSLQK) are compositionally biased toward polar residues.

Belongs to the cyclic nucleotide-gated cation channel (TC 1.A.1.5) family. In terms of assembly, interacts (via N-terminus) with DMI1 (via c-terminus). The Nod factor has no effect on this interaction, implying that the complex is maintained after activation. Expressed in roots, stems, leaves, flowers and pods.

The protein resides in the nucleus membrane. Cyclic nucleotide-gated channel involved in the establishment of both rhizobial and mycorrhizal associations. Required for full activation of nuclear-localized Ca(2+) oscillations by Nod and Myc factors. Simultaneous activation of the K(+)-permeable channel DMI1 and the Ca(2+) channel CNGC15 can give rise to sustained Ca(2+) oscillations. May function during fertilization in both female and male gametophytic Ca(2+) signaling. The protein is Protein CNGC15c of Medicago truncatula (Barrel medic).